Here is a 155-residue protein sequence, read N- to C-terminus: Ribosomal RNA large subunit methyltransferase H 1 (155 aa).

Residues Leu76, Gly108, and 127–132 contribute to the S-adenosyl-L-methionine site; that span reads FSKMTF.

This sequence belongs to the RNA methyltransferase RlmH family. As to quaternary structure, homodimer.

Its subcellular location is the cytoplasm. The catalysed reaction is pseudouridine(1915) in 23S rRNA + S-adenosyl-L-methionine = N(3)-methylpseudouridine(1915) in 23S rRNA + S-adenosyl-L-homocysteine + H(+). In terms of biological role, specifically methylates the pseudouridine at position 1915 (m3Psi1915) in 23S rRNA. This is Ribosomal RNA large subunit methyltransferase H 1 from Thermoanaerobacter pseudethanolicus (strain ATCC 33223 / 39E) (Clostridium thermohydrosulfuricum).